The sequence spans 587 residues: MEVEKTEKNIAEDDESKIIYRGWKVMPFIIGNETFEKLGIVGSSSNLVIYLTTVFNMKSITAAKVVNIYGGTSNFGTIVAAFLCDSYFGRYKTLSFAMIACFLGSVAMDLTAVIHPLHPAQCAKEIGSVCNGPSIGQIMFLAGAMVLLVIGAGGIRPCNLPFGADQFDPKTKEGKRGIESFFNWYFFTFTFAQMVSLTLIVYVQSNVSWSIGLAIPAILMLLGCIIFFAGSKLYVKVKASGSPIHSITRVIVVAIKKRRLKPVGPNELYNYIASDFKNSKLGHTEQFRFLDKSAIQTQDDKLNKDGSPVDAWKLCSMQQVEEVKCVIRVLPVWLSAALFYLAYIQQTTYTIFQSLQSDRRLGPGSFQIPAGSYTVFLMLGMTIFIPIYDRVLVPFLRKYTGRDGGITQLQRVGAGLFLCITSMMVSAIVEQYRRKVALTKPTLGLAPRKGAISSMSGMWLIPQLVLMGIADALAGVGQMEFYYKQFPENMRSFAGSLYYCGIGLASYLSTFLLSAVHDTTEGFSGGSWLPEDLNKGRLEYFYFLVAGMMTLNLAYFLLVSHWYRYKDVVAKDKDMDKTSAEFDKVSV.

The next 12 helical transmembrane spans lie at 35–55 (FEKLGIVGSSSNLVIYLTTVF), 65–85 (VVNIYGGTSNFGTIVAAFLCD), 94–114 (LSFAMIACFLGSVAMDLTAVI), 135–155 (IGQIMFLAGAMVLLVIGAGGI), 181–201 (FFNWYFFTFTFAQMVSLTLIV), 209–229 (WSIGLAIPAILMLLGCIIFFA), 325–345 (CVIRVLPVWLSAALFYLAYIQ), 368–388 (IPAGSYTVFLMLGMTIFIPIY), 412–432 (VGAGLFLCITSMMVSAIVEQY), 457–477 (GMWLIPQLVLMGIADALAGVG), 493–513 (FAGSLYYCGIGLASYLSTFLL), and 540–560 (YFYFLVAGMMTLNLAYFLLVS).

The protein belongs to the major facilitator superfamily. Proton-dependent oligopeptide transporter (POT/PTR) (TC 2.A.17) family. As to expression, expressed in roots, stems and major veins of the leaves. Detected in the companion cells of the root phloem.

The protein resides in the cell membrane. In terms of biological role, low-affinity nitrate transporter facilitating nitrate loading into root phloem. Not involved in dipeptides transport, but has a weak glucosinolate transport activity. The sequence is that of Protein NRT1/ PTR FAMILY 2.9 (NPF2.9) from Arabidopsis thaliana (Mouse-ear cress).